The chain runs to 461 residues: Fumarate hydratase class II (461 aa).

Substrate is bound by residues 98 to 100, 129 to 132, 139 to 141, and Thr187; these read SGT, HPND, and SSN. The segment at 120-140 is disordered; the sequence is SKKGGKSPVHPNDHVNKGQSS. His188 (proton donor/acceptor) is an active-site residue. Residue Ser318 is part of the active site. Residues Ser319 and 324–326 each bind substrate; that span reads KVN.

Belongs to the class-II fumarase/aspartase family. Fumarase subfamily. As to quaternary structure, homotetramer.

It is found in the cytoplasm. The catalysed reaction is (S)-malate = fumarate + H2O. It functions in the pathway carbohydrate metabolism; tricarboxylic acid cycle; (S)-malate from fumarate: step 1/1. Involved in the TCA cycle. Catalyzes the stereospecific interconversion of fumarate to L-malate. The polypeptide is Fumarate hydratase class II (Rickettsia felis (strain ATCC VR-1525 / URRWXCal2) (Rickettsia azadi)).